A 262-amino-acid chain; its full sequence is Adenosylcobinamide-GDP ribazoletransferase (262 aa).

6 consecutive transmembrane segments (helical) span residues 11-31, 43-63, 66-86, 121-141, 146-166, and 199-219; these read LNLF…SWVI, YFGL…WFTQ, LPTS…TGGF, AIVL…LALF, AITG…SLIF, and IFVL…SLWA.

Belongs to the CobS family. The cofactor is Mg(2+).

It is found in the cell inner membrane. The catalysed reaction is alpha-ribazole + adenosylcob(III)inamide-GDP = adenosylcob(III)alamin + GMP + H(+). It catalyses the reaction alpha-ribazole 5'-phosphate + adenosylcob(III)inamide-GDP = adenosylcob(III)alamin 5'-phosphate + GMP + H(+). The protein operates within cofactor biosynthesis; adenosylcobalamin biosynthesis; adenosylcobalamin from cob(II)yrinate a,c-diamide: step 7/7. Its function is as follows. Joins adenosylcobinamide-GDP and alpha-ribazole to generate adenosylcobalamin (Ado-cobalamin). Also synthesizes adenosylcobalamin 5'-phosphate from adenosylcobinamide-GDP and alpha-ribazole 5'-phosphate. The chain is Adenosylcobinamide-GDP ribazoletransferase from Shewanella denitrificans (strain OS217 / ATCC BAA-1090 / DSM 15013).